We begin with the raw amino-acid sequence, 462 residues long: U2 small nuclear ribonucleoprotein auxiliary factor 35 kDa subunit-related protein 2 (462 aa).

Over residues 1–13 (METAGATADATAG) the composition is skewed to low complexity. Disordered regions lie at residues 1–22 (META…RKKY), 44–66 (AELA…EEER), and 115–138 (WEEQ…EREE). A Glycyl lysine isopeptide (Lys-Gly) (interchain with G-Cter in SUMO2) cross-link involves residue lysine 49. Over residues 57–66 (AEEKRLEEER) the composition is skewed to basic and acidic residues. Residues 170–198 (EKDRANCPFYSKTGACRFGDRCSRKHNFP) form a C3H1-type 1 zinc finger. One can recognise an RRM domain in the interval 202 to 308 (PTLLIKGMFT…RQLQCEFCPV (107 aa)). A C3H1-type 2 zinc finger spans residues 310–337 (RWKMAICGLFEVQQCPRGKHCNFLHVFR). Position 353 is a phosphoserine (serine 353). A disordered region spans residues 354 to 462 (PDWTSSSFGK…QPQPQPQSDP (109 aa)). The span at 364 to 379 (NSERRERASHYDEYYG) shows a compositional bias: basic and acidic residues. Residue serine 389 is modified to Phosphoserine. Residues 392-403 (FYKRNGESDRKS) are compositionally biased toward basic and acidic residues. Residues 404–417 (SSRHRVKKSHRYGM) show a composition bias toward basic residues.

In terms of assembly, component of the U11/U12 snRNPs that are part of the U12-type spliceosome. Interacts (via RS domain) with SRSF1 and SRSF2. Interacts with U2AF2/U2AF65. In terms of processing, phosphorylated in the RS domain by SRPK1.

It is found in the nucleus. Functionally, pre-mRNA-binding protein required for splicing of both U2- and U12-type introns. Selectively interacts with the 3'-splice site of U2- and U12-type pre-mRNAs and promotes different steps in U2 and U12 intron splicing. Recruited to U12 pre-mRNAs in an ATP-dependent manner and is required for assembly of the prespliceosome, a precursor to other spliceosomal complexes. For U2-type introns, it is selectively and specifically required for the second step of splicing. This Mus musculus (Mouse) protein is U2 small nuclear ribonucleoprotein auxiliary factor 35 kDa subunit-related protein 2 (Zrsr2).